We begin with the raw amino-acid sequence, 132 residues long: Small ribosomal subunit protein uS8 (132 aa).

The protein belongs to the universal ribosomal protein uS8 family. Part of the 30S ribosomal subunit. Contacts proteins S5 and S12.

Functionally, one of the primary rRNA binding proteins, it binds directly to 16S rRNA central domain where it helps coordinate assembly of the platform of the 30S subunit. The chain is Small ribosomal subunit protein uS8 from Granulibacter bethesdensis (strain ATCC BAA-1260 / CGDNIH1).